The primary structure comprises 273 residues: MDTNVQKRRENKKSLRVKVISLGNAEVGKSCIIKRYCEKRFVPKYLATIGIDYGVTKVQVRDREIKVNIFDMAGHPFFYEVRNEFYKDSQGVILVYDVGLRESFDALDSWLTEMKQEMGSQANMENIIFVVCANKVDLTKRRVVDESEGRLWAESRGFHYFETSAQSGEGINEMFQSFFSSITDMCENGGKRPTPEVSVGFTKEQADTIRRIRNSKDSWDMLGVKPGATREEVNKAYRKLAVLLHPDKCVAPGSEDAFKAVVNARTSLLKNIK.

Residues 23-30 (GNAEVGKS), 71-75 (DMAGH), and 134-137 (NKVD) each bind GTP. The J domain maps to 217–273 (DSWDMLGVKPGATREEVNKAYRKLAVLLHPDKCVAPGSEDAFKAVVNARTSLLKNIK).

The protein belongs to the small GTPase superfamily. Rab family.

The protein localises to the nucleus. In terms of biological role, GTPase possibly involved in regulation of the MEK/ERK pathway. This is DnaJ homolog subfamily C member 27 (dnajc27) from Danio rerio (Zebrafish).